The sequence spans 357 residues: MLLSLIVTFLGAFLTLLFMRPIAQKIGLVDKPNFRKRHQGAIPLIGGVSLFVGNLCFYLLEWEQMRLPTLYLFSIFVLLVIGMIDDRFDISPFLRAGIQAILAILMIDLGNLYLDHLGQILGPFQLTLGSIGLIITVLATIAAINAFNMIDGIDGLLGGLSSVAFVSIGILLIKDNQLDLAYWSFALIIAILPYFMMNLGIPFGQKFKVFMGDAGSTLIGFTIIWILLLSTQGKGHPMNPVTALWIIAIPLIDMIAIMYRRLRKGKSPFRPDRLHVHHLMMRAGLTSRQAFLLITFAAAICATIGILGEIFYINEWLMFAGFILLFFMYSYSITRAWRITRWIRRMRRRAKRIHNKG.

7 helical membrane-spanning segments follow: residues 40–60, 64–84, 124–144, 183–203, 209–229, 238–258, and 291–311; these read GAIP…FYLL, QMRL…IGMI, FQLT…IAAI, WSFA…GIPF, VFMG…ILLL, MNPV…IAIM, and FLLI…GEIF.

This sequence belongs to the glycosyltransferase 4 family. WecA subfamily. It depends on Mg(2+) as a cofactor. Mn(2+) is required as a cofactor.

The protein resides in the cell inner membrane. It carries out the reaction di-trans,octa-cis-undecaprenyl phosphate + UDP-N-acetyl-alpha-D-glucosamine = N-acetyl-alpha-D-glucosaminyl-di-trans,octa-cis-undecaprenyl diphosphate + UMP. Its pathway is bacterial outer membrane biogenesis; LPS O-antigen biosynthesis. In terms of biological role, catalyzes the transfer of the GlcNAc-1-phosphate moiety from UDP-GlcNAc onto the carrier lipid undecaprenyl phosphate (C55-P), yielding GlcNAc-pyrophosphoryl-undecaprenyl (GlcNAc-PP-C55). The polypeptide is Undecaprenyl-phosphate alpha-N-acetylglucosaminyl 1-phosphate transferase (Pasteurella multocida (strain Pm70)).